The primary structure comprises 1448 residues: Probable serine/threonine-protein kinase irlB (1448 aa).

Residues 412–423 (DDDDYDDYDDDD) show a composition bias toward acidic residues. Positions 412–446 (DDDDYDDYDDDDDHHSGCNNNNNNNNDGDHNEDEN) are disordered. Residues 428–437 (GCNNNNNNNN) show a composition bias toward low complexity. Coiled-coil stretches lie at residues 666 to 817 (AESE…EIQN), 887 to 921 (EIQL…SNMK), and 974 to 1016 (ENNK…QDED). The interval 975-1008 (NNKKQNLINDNNNNNNNNNNNNNNNNNNNNNNKL) is disordered. The span at 978-1008 (KQNLINDNNNNNNNNNNNNNNNNNNNNNNKL) shows a compositional bias: low complexity. The 267-residue stretch at 1027 to 1293 (RNESNILGRG…IQNVLNHPLF (267 aa)) folds into the Protein kinase domain. ATP is bound by residues 1033–1041 (LGRGSNGTL) and Lys1056. The Proton acceptor role is filled by Asp1151. In terms of domain architecture, KEN spans 1296–1448 (LEKKIQFIDA…TIDYLFNFYN (153 aa)).

This sequence belongs to the protein kinase superfamily. Ser/Thr protein kinase family.

The catalysed reaction is L-seryl-[protein] + ATP = O-phospho-L-seryl-[protein] + ADP + H(+). It catalyses the reaction L-threonyl-[protein] + ATP = O-phospho-L-threonyl-[protein] + ADP + H(+). This chain is Probable serine/threonine-protein kinase irlB (irlB-1), found in Dictyostelium discoideum (Social amoeba).